The sequence spans 191 residues: Ribosomal RNA large subunit methyltransferase E (191 aa).

5 residues coordinate S-adenosyl-L-methionine: Gly49, Trp51, Asp66, Asp82, and Asp105. Lys145 (proton acceptor) is an active-site residue.

It belongs to the class I-like SAM-binding methyltransferase superfamily. RNA methyltransferase RlmE family.

The protein resides in the cytoplasm. It catalyses the reaction uridine(2552) in 23S rRNA + S-adenosyl-L-methionine = 2'-O-methyluridine(2552) in 23S rRNA + S-adenosyl-L-homocysteine + H(+). Its function is as follows. Specifically methylates the uridine in position 2552 of 23S rRNA at the 2'-O position of the ribose in the fully assembled 50S ribosomal subunit. This Archaeoglobus fulgidus (strain ATCC 49558 / DSM 4304 / JCM 9628 / NBRC 100126 / VC-16) protein is Ribosomal RNA large subunit methyltransferase E.